We begin with the raw amino-acid sequence, 81 residues long: Exodeoxyribonuclease 7 small subunit (81 aa).

The disordered stretch occupies residues 59 to 81; sequence KLVDKDGNEKTLDPQNASAPEEE. A compositionally biased stretch (basic and acidic residues) spans 60-70; sequence LVDKDGNEKTL. Residues 71–81 show a composition bias toward polar residues; that stretch reads DPQNASAPEEE.

This sequence belongs to the XseB family. In terms of assembly, heterooligomer composed of large and small subunits.

The protein resides in the cytoplasm. It catalyses the reaction Exonucleolytic cleavage in either 5'- to 3'- or 3'- to 5'-direction to yield nucleoside 5'-phosphates.. Bidirectionally degrades single-stranded DNA into large acid-insoluble oligonucleotides, which are then degraded further into small acid-soluble oligonucleotides. In Lactobacillus gasseri (strain ATCC 33323 / DSM 20243 / BCRC 14619 / CIP 102991 / JCM 1131 / KCTC 3163 / NCIMB 11718 / NCTC 13722 / AM63), this protein is Exodeoxyribonuclease 7 small subunit.